A 397-amino-acid polypeptide reads, in one-letter code: Protein irld-34 (397 aa).

The polypeptide is Protein irld-34 (Caenorhabditis elegans).